Here is a 607-residue protein sequence, read N- to C-terminus: Thymidine kinase (607 aa).

2 disordered regions span residues 1–160 (MAGF…ADST) and 180–215 (DDKSDCESEDESNFRRPSSHSALKQKNGGKGKPSGL). Positions 17-32 (KCQEDESPENERHENF) are enriched in basic and acidic residues. Polar residues-rich tracts occupy residues 88–106 (AAVTSNTGNSPGSRHTSCP), 148–160 (RKTSCTEGGADST), and 194–203 (RRPSSHSALK). 291–298 (GAPGVGKT) is a binding site for ATP. Glu-317 acts as the Proton acceptor in catalysis. Gln-355 lines the substrate pocket. Residue Arg-445 participates in ATP binding. Arg-451 lines the substrate pocket.

It belongs to the herpesviridae thymidine kinase family. In terms of assembly, homodimer.

It localises to the virion tegument. It is found in the host nucleus. It catalyses the reaction thymidine + ATP = dTMP + ADP + H(+). In terms of biological role, catalyzes the transfer of the gamma-phospho group of ATP to thymidine to generate dTMP in the salvage pathway of pyrimidine synthesis. The dTMP serves as a substrate for DNA polymerase during viral DNA replication. Allows the virus to be reactivated and to grow in non-proliferative cells lacking a high concentration of phosphorylated nucleic acid precursors. The polypeptide is Thymidine kinase (Epstein-Barr virus (strain GD1) (HHV-4)).